A 144-amino-acid chain; its full sequence is Large ribosomal subunit protein uL15 (144 aa).

The disordered stretch occupies residues 1–52 (MRLNSLSPAEGAKHSAKRLGRGIGSGLGKTGGRGHKGQKSRTGGGVRRGFEG). A compositionally biased stretch (gly residues) spans 21–31 (RGIGSGLGKTG).

It belongs to the universal ribosomal protein uL15 family. In terms of assembly, part of the 50S ribosomal subunit.

Binds to the 23S rRNA. The sequence is that of Large ribosomal subunit protein uL15 from Haemophilus ducreyi (strain 35000HP / ATCC 700724).